The sequence spans 621 residues: Chaperone protein HtpG (621 aa).

Residues 1–325 are a; substrate-binding; sequence MTDASVKETF…SQDLSLNVSR (325 aa). A b region spans residues 326-541; sequence EMLQSDPKLA…EGDIDVNLER (216 aa). Residues 542–621 are c; the sequence is MLKRHGQLQD…RLGSVMDSAL (80 aa).

It belongs to the heat shock protein 90 family. In terms of assembly, homodimer.

Its subcellular location is the cytoplasm. Functionally, molecular chaperone. Has ATPase activity. The protein is Chaperone protein HtpG of Roseobacter denitrificans (strain ATCC 33942 / OCh 114) (Erythrobacter sp. (strain OCh 114)).